Here is a 453-residue protein sequence, read N- to C-terminus: Chromosomal replication initiator protein DnaA (453 aa).

The interval 1–71 is domain I, interacts with DnaA modulators; that stretch reads MSEKEIWEKV…QAILFDVVGY (71 aa). Residues 71-114 form a domain II region; it reads YEVKPHFITTEELANYSNNETATPKETTKPSTETTEDNHVLGRE. Positions 115–331 are domain III, AAA+ region; the sequence is QFNAHNTFDT…GALTRLLAYS (217 aa). 4 residues coordinate ATP: Gly-159, Gly-161, Lys-162, and Thr-163. Residues 332-453 are domain IV, binds dsDNA; that stretch reads QLLGKPITTE…ENLEKEIRNV (122 aa).

It belongs to the DnaA family. In terms of assembly, oligomerizes as a right-handed, spiral filament on DNA at oriC.

It is found in the cytoplasm. Plays an essential role in the initiation and regulation of chromosomal replication. ATP-DnaA binds to the origin of replication (oriC) to initiate formation of the DNA replication initiation complex once per cell cycle. Binds the DnaA box (a 9 base pair repeat at the origin) and separates the double-stranded (ds)DNA. Forms a right-handed helical filament on oriC DNA; dsDNA binds to the exterior of the filament while single-stranded (ss)DNA is stabiized in the filament's interior. The ATP-DnaA-oriC complex binds and stabilizes one strand of the AT-rich DNA unwinding element (DUE), permitting loading of DNA polymerase. After initiation quickly degrades to an ADP-DnaA complex that is not apt for DNA replication. Binds acidic phospholipids. This Staphylococcus aureus (strain bovine RF122 / ET3-1) protein is Chromosomal replication initiator protein DnaA.